A 238-amino-acid chain; its full sequence is Probable 2-phosphosulfolactate phosphatase (238 aa).

This sequence belongs to the ComB family. The cofactor is Mg(2+).

The catalysed reaction is (2R)-O-phospho-3-sulfolactate + H2O = (2R)-3-sulfolactate + phosphate. The sequence is that of Probable 2-phosphosulfolactate phosphatase from Clostridium beijerinckii (strain ATCC 51743 / NCIMB 8052) (Clostridium acetobutylicum).